The following is a 172-amino-acid chain: 3-hydroxydecanoyl-[acyl-carrier-protein] dehydratase (172 aa).

The active site involves H71.

This sequence belongs to the thioester dehydratase family. FabA subfamily. As to quaternary structure, homodimer.

It localises to the cytoplasm. The enzyme catalyses a (3R)-hydroxyacyl-[ACP] = a (2E)-enoyl-[ACP] + H2O. It catalyses the reaction (3R)-hydroxydecanoyl-[ACP] = (2E)-decenoyl-[ACP] + H2O. It carries out the reaction (2E)-decenoyl-[ACP] = (3Z)-decenoyl-[ACP]. Its pathway is lipid metabolism; fatty acid biosynthesis. In terms of biological role, necessary for the introduction of cis unsaturation into fatty acids. Catalyzes the dehydration of (3R)-3-hydroxydecanoyl-ACP to E-(2)-decenoyl-ACP and then its isomerization to Z-(3)-decenoyl-ACP. Can catalyze the dehydratase reaction for beta-hydroxyacyl-ACPs with saturated chain lengths up to 16:0, being most active on intermediate chain length. This Escherichia fergusonii (strain ATCC 35469 / DSM 13698 / CCUG 18766 / IAM 14443 / JCM 21226 / LMG 7866 / NBRC 102419 / NCTC 12128 / CDC 0568-73) protein is 3-hydroxydecanoyl-[acyl-carrier-protein] dehydratase.